A 148-amino-acid chain; its full sequence is Urease accessory protein UreE (148 aa).

Belongs to the UreE family.

The protein resides in the cytoplasm. In terms of biological role, involved in urease metallocenter assembly. Binds nickel. Probably functions as a nickel donor during metallocenter assembly. This chain is Urease accessory protein UreE, found in Bacillus sp. (strain TB-90).